The chain runs to 86 residues: Small ribosomal subunit protein bS18c (86 aa).

The protein belongs to the bacterial ribosomal protein bS18 family. In terms of assembly, part of the 30S ribosomal subunit.

Its subcellular location is the plastid. It is found in the chloroplast. The protein is Small ribosomal subunit protein bS18c of Larix laricina (Tamarack).